The following is a 223-amino-acid chain: MTKQHANWSPYDNNGGTCVAIAGSDYCVIAADTRMSTGYSILSRDYSKIHKLADRAVLSSSGFQADVKALQKVLKSRHLIYQHQHNKQMSCPAMAQLLSNTLYFKRFFPYYAFNVLGGLDEEGKGCVFTYDAVGSYERVGYGAQGSGSTLIMPFLDNQLKSPSPLLLPKQDSNTPLSEAEAVDLVKTVFASATERDIYTGDKLEIMILKADGIKTELMDLRKD.

This sequence belongs to the peptidase T1B family. Component of the 20S core complex of the 26S proteasome. The 26S proteasome is composed of a core protease (CP), known as the 20S proteasome, capped at one or both ends by the 19S regulatory particle (RP/PA700). The 20S proteasome core is composed of 28 subunits that are arranged in four stacked rings, resulting in a barrel-shaped structure. The two end rings are each formed by seven alpha subunits, and the two central rings are each formed by seven beta subunits. The catalytic chamber with the active sites is on the inside of the barrel. Present in all tissues examined. Slightly lower levels in roots.

The protein localises to the cytoplasm. The protein resides in the nucleus. Its function is as follows. Non-catalytic component of the proteasome, a multicatalytic proteinase complex which is characterized by its ability to cleave peptides with Arg, Phe, Tyr, Leu, and Glu adjacent to the leaving group at neutral or slightly basic pH. The proteasome has an ATP-dependent proteolytic activity. The sequence is that of Proteasome subunit beta type-1 (PBF1) from Arabidopsis thaliana (Mouse-ear cress).